We begin with the raw amino-acid sequence, 339 residues long: Glycerol-3-phosphate dehydrogenase [NAD(P)+] (339 aa).

Ser14, Tyr15, His35, and Lys109 together coordinate NADPH. Sn-glycerol 3-phosphate-binding residues include Lys109, Gly138, and Thr140. Ala142 is an NADPH binding site. Lys194, Asp247, Ser257, Arg258, and Asn259 together coordinate sn-glycerol 3-phosphate. Residue Lys194 is the Proton acceptor of the active site. Arg258 is a binding site for NADPH. Positions 282 and 284 each coordinate NADPH.

It belongs to the NAD-dependent glycerol-3-phosphate dehydrogenase family.

The protein localises to the cytoplasm. The catalysed reaction is sn-glycerol 3-phosphate + NAD(+) = dihydroxyacetone phosphate + NADH + H(+). It catalyses the reaction sn-glycerol 3-phosphate + NADP(+) = dihydroxyacetone phosphate + NADPH + H(+). It participates in membrane lipid metabolism; glycerophospholipid metabolism. In terms of biological role, catalyzes the reduction of the glycolytic intermediate dihydroxyacetone phosphate (DHAP) to sn-glycerol 3-phosphate (G3P), the key precursor for phospholipid synthesis. The chain is Glycerol-3-phosphate dehydrogenase [NAD(P)+] from Shewanella halifaxensis (strain HAW-EB4).